Here is a 462-residue protein sequence, read N- to C-terminus: Chitinase 1 (462 aa).

An N-terminal signal peptide occupies residues 1–17 (MILNLIILLAISIVASA). The 274-residue stretch at 18-291 (SNIAAYWGQN…NQLHQALSGS (274 aa)) folds into the GH18 domain. Asn57 is a glycosylation site (N-linked (GlcNAc...) asparagine). Glu147 (proton donor) is an active-site residue.

It belongs to the glycosyl hydrolase 18 family. Chitinase class V subfamily.

Its subcellular location is the secreted. It catalyses the reaction Random endo-hydrolysis of N-acetyl-beta-D-glucosaminide (1-&gt;4)-beta-linkages in chitin and chitodextrins.. Its function is as follows. Chitinase involved in the remodeling of chitin in the fungal cell wall. Plays a role in cell separation. This is Chitinase 1 (CHT1) from Candida albicans (strain SC5314 / ATCC MYA-2876) (Yeast).